The following is a 20-amino-acid chain: Catechol 1,2-dioxygenase (20 aa).

This sequence belongs to the intradiol ring-cleavage dioxygenase family. Homodimer which dissociates into active monomeric subunits at high ionic strengths. Requires Fe(3+) as cofactor.

It carries out the reaction catechol + O2 = cis,cis-muconate + 2 H(+). It functions in the pathway aromatic compound metabolism; beta-ketoadipate pathway; 5-oxo-4,5-dihydro-2-furylacetate from catechol: step 1/3. The protein is Catechol 1,2-dioxygenase of Acinetobacter radioresistens.